The following is a 357-amino-acid chain: Phosphoribosylformylglycinamidine cyclo-ligase (357 aa).

Belongs to the AIR synthase family.

The protein localises to the cytoplasm. It carries out the reaction 2-formamido-N(1)-(5-O-phospho-beta-D-ribosyl)acetamidine + ATP = 5-amino-1-(5-phospho-beta-D-ribosyl)imidazole + ADP + phosphate + H(+). Its pathway is purine metabolism; IMP biosynthesis via de novo pathway; 5-amino-1-(5-phospho-D-ribosyl)imidazole from N(2)-formyl-N(1)-(5-phospho-D-ribosyl)glycinamide: step 2/2. The polypeptide is Phosphoribosylformylglycinamidine cyclo-ligase (Rhizobium leguminosarum bv. trifolii (strain WSM2304)).